We begin with the raw amino-acid sequence, 214 residues long: Oxaloacetate tautomerase fahd-1, mitochondrial (214 aa).

The Mg(2+) site is built by E65, E67, and D96.

It belongs to the FAH family. The cofactor is Mg(2+). Mn(2+) is required as a cofactor. Widely expressed.

The protein localises to the mitochondrion. The enzyme catalyses oxaloacetate = enol-oxaloacetate. Its function is as follows. Tautomerase that converts enol-oxaloacetate, a strong inhibitor of succinate dehydrogenase, to the physiological keto form of oxaloacetate. The polypeptide is Oxaloacetate tautomerase fahd-1, mitochondrial (Caenorhabditis elegans).